A 160-amino-acid polypeptide reads, in one-letter code: Putative oxygenase ATEG_00330 (160 aa).

In terms of domain architecture, EthD spans 24-100; it reads HYFGTALHAK…RNIAADPEFA (77 aa).

Belongs to the tpcK family.

Putative oxygenase; part of the gene cluster that mediates the biosynthesis of isoflavipucine. The PKS part of the PKS-NRPS ATEG_00325 probably assembles a triketide from an acetyl starter and two malonyl-CoA extender units. The poly-beta-keto intermediate would then be fused to the leucine unit by the NRPS part. The resulting amide would be liberated from the PKS-NRPS through reductive release of the linear PKS-NRPS product from the enzyme complex. Further steps in isoflapucine synthesis include a cyclization step, an oxidation step, a hydrolysis step involving a trans-amidation, and an additional oxidation step, leading to flavipucine. Formation of isoflavipucine from flavipucine requires an unusual rearrangement. Alternative rearrangement reactions could build up rubrobramide, representing a branching of flavipucine biosynthesis. The enzymes involved in the post-PKS-NRPS steps have not been identified yet, but the putative oxygenases ATEG_003329 and ATEG_00330 encoded by the cluster could play a role. This chain is Putative oxygenase ATEG_00330, found in Aspergillus terreus (strain NIH 2624 / FGSC A1156).